The chain runs to 183 residues: CASP-like protein UU2 (183 aa).

Residues 1–33 are Cytoplasmic-facing; sequence MEESQQQSSKFDAPPSPYVPSRVYLAQIYWKKP. A helical membrane pass occupies residues 34-54; that stretch reads AIVVLRVLQFIFSLIAFSVMA. Topologically, residues 55-72 are extracellular; the sequence is DVLHDVQGSIKSLSYTVA. The chain crosses the membrane as a helical span at residues 73–93; sequence IGVLACAYALAQLSFSLWCVI. Residues 94-118 are Cytoplasmic-facing; sequence RGATSSAGVTPLYQYATFICDQMST. A helical membrane pass occupies residues 119-139; it reads YFLISAASATATLIDVSGVCG. The Extracellular portion of the chain corresponds to 140-156; sequence SNGSGTNLCSRSTASVT. N-linked (GlcNAc...) asparagine glycosylation is present at Asn-141. Residues 157-177 form a helical membrane-spanning segment; that stretch reads FAFLAFLAFSASSVLTGYYLV. At 178–183 the chain is on the cytoplasmic side; the sequence is KCILKA.

The protein belongs to the Casparian strip membrane proteins (CASP) family. In terms of assembly, homodimer and heterodimers.

It is found in the cell membrane. The polypeptide is CASP-like protein UU2 (Selaginella moellendorffii (Spikemoss)).